Reading from the N-terminus, the 163-residue chain is MFKKSYQFFALVLFSIFNVLVTSASAIDLDEATRTVVADSNGNTTVLTPEQVKRGKRLFNNTCGACHVGGVTKTNPNVGLRPEGLSLATPRRDNAAALVDYLKNPTSYDGLESIAEIHPSIKSGDIYPRMRSLTDEDLFSIAGHILLQPKIVTEKWGGGKIYY.

The first 26 residues, 1-26, serve as a signal peptide directing secretion; the sequence is MFKKSYQFFALVLFSIFNVLVTSASA. C63, C66, H67, and H118 together coordinate heme c.

It belongs to the cytochrome c family. PsbV subfamily. PSII is composed of 1 copy each of membrane proteins PsbA, PsbB, PsbC, PsbD, PsbE, PsbF, PsbH, PsbI, PsbJ, PsbK, PsbL, PsbM, PsbT, PsbY, PsbZ, Psb30/Ycf12, at least 3 peripheral proteins of the oxygen-evolving complex and a large number of cofactors. It forms dimeric complexes. Heme c is required as a cofactor.

It localises to the plastid. The protein localises to the chloroplast thylakoid membrane. Its function is as follows. One of the extrinsic, lumenal subunits of photosystem II (PSII). PSII is a light-driven water plastoquinone oxidoreductase, using light energy to abstract electrons from H(2)O, generating a proton gradient subsequently used for ATP formation. The extrinsic proteins stabilize the structure of photosystem II oxygen-evolving complex (OEC), the ion environment of oxygen evolution and protect the OEC against heat-induced inactivation. This is Photosystem II extrinsic protein V from Trieres chinensis (Marine centric diatom).